The following is a 239-amino-acid chain: tRNA (guanine-N(7)-)-methyltransferase (239 aa).

Positions 68, 93, 120, and 143 each coordinate S-adenosyl-L-methionine. D143 is a catalytic residue. Residues K147, D180, and 217 to 220 (TKFE) contribute to the substrate site.

It belongs to the class I-like SAM-binding methyltransferase superfamily. TrmB family.

The catalysed reaction is guanosine(46) in tRNA + S-adenosyl-L-methionine = N(7)-methylguanosine(46) in tRNA + S-adenosyl-L-homocysteine. The protein operates within tRNA modification; N(7)-methylguanine-tRNA biosynthesis. Its function is as follows. Catalyzes the formation of N(7)-methylguanine at position 46 (m7G46) in tRNA. This is tRNA (guanine-N(7)-)-methyltransferase from Vibrio parahaemolyticus serotype O3:K6 (strain RIMD 2210633).